The chain runs to 161 residues: Nucleoside diphosphate kinase (161 aa).

Positions 12, 60, 88, 94, and 105 each coordinate ATP. Residue His-121 is the Pros-phosphohistidine intermediate of the active site.

Belongs to the NDK family. Requires Mg(2+) as cofactor.

The protein localises to the cytoplasm. It carries out the reaction a 2'-deoxyribonucleoside 5'-diphosphate + ATP = a 2'-deoxyribonucleoside 5'-triphosphate + ADP. It catalyses the reaction a ribonucleoside 5'-diphosphate + ATP = a ribonucleoside 5'-triphosphate + ADP. Its function is as follows. Major role in the synthesis of nucleoside triphosphates other than ATP. The ATP gamma phosphate is transferred to the NDP beta phosphate via a ping-pong mechanism, using a phosphorylated active-site intermediate. In Pyrococcus furiosus (strain ATCC 43587 / DSM 3638 / JCM 8422 / Vc1), this protein is Nucleoside diphosphate kinase.